Here is a 296-residue protein sequence, read N- to C-terminus: SHSP domain-containing protein CPUR_05420 (296 aa).

The disordered stretch occupies residues alanine 50 to asparagine 83. Residues glutamate 169–valine 296 enclose the sHSP domain.

The protein belongs to the small heat shock protein (HSP20) family.

Its function is as follows. Monooxygenase; part of the ergochrome gene cluster responsible for the typical purple-black color of the ergot sclerotia. The ergochrome gene cluster produces several ergot pigments including the yellow ergochrome secalonic acid and its derivatives, as well as the red anthraquinones endocrocin and clavorubin. The pathway begins with the synthesis of atrochrysone thioester by the polyketide synthase (PKS) CPUR_05437. The atrochrysone carboxyl ACP thioesterase CPUR_05436 then breaks the thioester bond and releases the atrochrysone carboxylic acid from CPUR_05437. The atrochrysone carboxylic acid is then converted to atrochrysone which is further transformed into emodin anthrone. The next step is performed by the anthrone oxygenase CPUR_05434 that catalyzes the oxidation of emodinanthrone to emodin. Emodin is further modified to yield monodictyphenone via several steps involving CPUR_05427, CPUR_05428, CPUR_05429 and CPUR_05430. The short chain dehydrogenase/reductase CPUR_05418 then catalyzes the C-5 ketoreduction to give the xanthone skeleton of the monomeric units. Ergochromes formation requires further dimerization steps of different xanthone units, probably catalyzed by the cytochrome P450 monooxygenase CPUR_05419. CPUR_05425, CPUR_05426 and CPUR_05431 are unique to Claviceps, thus it is likely that they are involved in further modification of xanthone units or in their dimerization. The yellow ergochromes and the red anthraquinone pigments endocrocin and clavorubin are products from the same PKS derived precursors and the latter are likely shunt products in the pathway of xanthone biosynthesis. It is proposed that atrochrysone carboxylic acid released from the PKS CPUR_05437 can also be converted to endocrocin anthrone which is further oxidized into endocrocin by CPUR_05435. Endocrocin could be then modified to clavorubin, possibly by CPUR_05423 and CPUR_05431. Clavorubin is the principal anthraquinone metabolite produced by the cluster with a much higher yield compared to endocrocin. The chain is SHSP domain-containing protein CPUR_05420 from Claviceps purpurea (strain 20.1) (Ergot fungus).